The following is a 1372-amino-acid chain: DNA-directed RNA polymerase subunit beta (1372 aa).

Belongs to the RNA polymerase beta chain family. As to quaternary structure, the RNAP catalytic core consists of 2 alpha, 1 beta, 1 beta' and 1 omega subunit. When a sigma factor is associated with the core the holoenzyme is formed, which can initiate transcription.

It carries out the reaction RNA(n) + a ribonucleoside 5'-triphosphate = RNA(n+1) + diphosphate. DNA-dependent RNA polymerase catalyzes the transcription of DNA into RNA using the four ribonucleoside triphosphates as substrates. This is DNA-directed RNA polymerase subunit beta from Psychrobacter cryohalolentis (strain ATCC BAA-1226 / DSM 17306 / VKM B-2378 / K5).